The primary structure comprises 109 residues: Class I hydrophobin 2 (109 aa).

Residues 1–18 form the signal peptide; sequence MQFKLAFVSIALATLAVA. 4 disulfides stabilise this stretch: C30-C90, C37-C84, C38-C71, and C91-C104.

The protein belongs to the fungal hydrophobin family. As to quaternary structure, self-assembles to form functional amyloid fibrils called rodlets. Self-assembly into fibrillar rodlets occurs spontaneously at hydrophobic:hydrophilic interfaces and the rodlets further associate laterally to form amphipathic monolayers.

The protein resides in the secreted. It localises to the cell wall. Functionally, aerial growth, conidiation, and dispersal of filamentous fungi in the environment rely upon a capability of their secreting small amphipathic proteins called hydrophobins (HPBs) with low sequence identity. Class I can self-assemble into an outermost layer of rodlet bundles on aerial cell surfaces, conferring cellular hydrophobicity that supports fungal growth, development and dispersal; whereas Class II form highly ordered films at water-air interfaces through intermolecular interactions but contribute nothing to the rodlet structure. Hyd2 is a class I hydrophobin that may allow the dikaryotic mycelia to attach to the hydrophobic surface of the substrate. Higher expression in dikaryotic mycelia than in monokaryotic mycelia indicates that dikaryons require more hyd2 hydrophobin than the monokaryons, presumably for a higher rate of hyphal growth. The protein is Class I hydrophobin 2 of Lentinula edodes (Shiitake mushroom).